Here is a 764-residue protein sequence, read N- to C-terminus: 5-methyltetrahydropteroyltriglutamate--homocysteine methyltransferase (764 aa).

5-methyltetrahydropteroyltri-L-glutamate-binding positions include 16–19 (RELK) and K121. Residues 440–442 (IGS) and E493 each bind L-homocysteine. Residues 440-442 (IGS) and E493 contribute to the L-methionine site. 5-methyltetrahydropteroyltri-L-glutamate is bound by residues 524 to 525 (RC) and W570. D608 contacts L-homocysteine. D608 contributes to the L-methionine binding site. Residue E614 coordinates 5-methyltetrahydropteroyltri-L-glutamate. H650, C652, and E674 together coordinate Zn(2+). H703 functions as the Proton donor in the catalytic mechanism. A Zn(2+)-binding site is contributed by C735.

Belongs to the vitamin-B12 independent methionine synthase family. The cofactor is Zn(2+).

It catalyses the reaction 5-methyltetrahydropteroyltri-L-glutamate + L-homocysteine = tetrahydropteroyltri-L-glutamate + L-methionine. It functions in the pathway amino-acid biosynthesis; L-methionine biosynthesis via de novo pathway; L-methionine from L-homocysteine (MetE route): step 1/1. Catalyzes the transfer of a methyl group from 5-methyltetrahydrofolate to homocysteine resulting in methionine formation. This chain is 5-methyltetrahydropteroyltriglutamate--homocysteine methyltransferase, found in Burkholderia cenocepacia (strain ATCC BAA-245 / DSM 16553 / LMG 16656 / NCTC 13227 / J2315 / CF5610) (Burkholderia cepacia (strain J2315)).